A 430-amino-acid polypeptide reads, in one-letter code: Asparagine--tRNA ligase (430 aa).

It belongs to the class-II aminoacyl-tRNA synthetase family. In terms of assembly, homodimer.

It localises to the cytoplasm. It catalyses the reaction tRNA(Asn) + L-asparagine + ATP = L-asparaginyl-tRNA(Asn) + AMP + diphosphate + H(+). The protein is Asparagine--tRNA ligase of Geobacillus thermodenitrificans (strain NG80-2).